Reading from the N-terminus, the 555-residue chain is Undecaprenyl phosphate-alpha-4-amino-4-deoxy-L-arabinose arabinosyl transferase (555 aa).

11 consecutive transmembrane segments (helical) span residues 6–26 (GSWA…PLNG), 87–107 (FGSV…AMLM), 116–136 (LATL…YSVL), 178–198 (FMTK…PIVI), 206–226 (LLIY…PWAL), 257–277 (APFW…LALL), 293–313 (ELFF…IAKG), 315–335 (LPTY…AYAE), 351–371 (VLNG…GSGL), 384–404 (PKIV…VVSV), and 411–431 (WSWA…AIPQ).

The protein belongs to the glycosyltransferase 83 family.

Its subcellular location is the cell inner membrane. It catalyses the reaction 4-amino-4-deoxy-alpha-L-arabinopyranosyl di-trans,octa-cis-undecaprenyl phosphate + lipid IVA = lipid IIA + di-trans,octa-cis-undecaprenyl phosphate.. The protein operates within lipopolysaccharide metabolism; 4-amino-4-deoxy-beta-L-arabinose-lipid A biosynthesis. Catalyzes the transfer of the L-Ara4N moiety of the glycolipid undecaprenyl phosphate-alpha-L-Ara4N to lipid A. The modified arabinose is attached to lipid A and is required for resistance to polymyxin and cationic antimicrobial peptides. This chain is Undecaprenyl phosphate-alpha-4-amino-4-deoxy-L-arabinose arabinosyl transferase, found in Serratia proteamaculans (strain 568).